A 377-amino-acid polypeptide reads, in one-letter code: Queuine tRNA-ribosyltransferase (377 aa).

Catalysis depends on D94, which acts as the Proton acceptor. Residues 94 to 98 (DSGGF), D148, Q191, and G218 each bind substrate. The tract at residues 249–255 (GVGTPDD) is RNA binding. Residue D268 is the Nucleophile of the active site. An RNA binding; important for wobble base 34 recognition region spans residues 273-277 (TRAGR).

Belongs to the queuine tRNA-ribosyltransferase family. In terms of assembly, homodimer. Within each dimer, one monomer is responsible for RNA recognition and catalysis, while the other monomer binds to the replacement base PreQ1.

The enzyme catalyses 7-aminomethyl-7-carbaguanine + guanosine(34) in tRNA = 7-aminomethyl-7-carbaguanosine(34) in tRNA + guanine. The protein operates within tRNA modification; tRNA-queuosine biosynthesis. Catalyzes the base-exchange of a guanine (G) residue with the queuine precursor 7-aminomethyl-7-deazaguanine (PreQ1) at position 34 (anticodon wobble position) in tRNAs with GU(N) anticodons (tRNA-Asp, -Asn, -His and -Tyr). Catalysis occurs through a double-displacement mechanism. The nucleophile active site attacks the C1' of nucleotide 34 to detach the guanine base from the RNA, forming a covalent enzyme-RNA intermediate. The proton acceptor active site deprotonates the incoming PreQ1, allowing a nucleophilic attack on the C1' of the ribose to form the product. After dissociation, two additional enzymatic reactions on the tRNA convert PreQ1 to queuine (Q), resulting in the hypermodified nucleoside queuosine (7-(((4,5-cis-dihydroxy-2-cyclopenten-1-yl)amino)methyl)-7-deazaguanosine). This chain is Queuine tRNA-ribosyltransferase, found in Brucella suis biovar 1 (strain 1330).